Consider the following 340-residue polypeptide: Heat-inducible transcription repressor HrcA (340 aa).

Belongs to the HrcA family.

Negative regulator of class I heat shock genes (grpE-dnaK-dnaJ and groELS operons). Prevents heat-shock induction of these operons. The protein is Heat-inducible transcription repressor HrcA of Burkholderia vietnamiensis (strain G4 / LMG 22486) (Burkholderia cepacia (strain R1808)).